Here is a 489-residue protein sequence, read N- to C-terminus: MKLVELIKNLTIELQDGPLDREISGIAYDSRRVKPGDLFICISGLKSDGHLFAGQAIENGAVAVLAERQLDTGGKATLLTTPDTRSALALLAANYYGRPSKSIRVVAVTGTNGKTTTTDLIKAILEEAGKKTAIMGTLYAQVGEIQREMQHTTPEALEIESFMALCREEKADYIVMEVSSHALQLQRVAEIDFNVAVFTNLTQDHLDFHQNMDNYRAAKLQLFQMIKEEKQNYAIINIDDPWAEEIFQAATIPCRSYGIKKRSDYQAGELKIDLDGSSFRLHYGDNSLMINMKLIGLFSIYNALAAISFALQEGIDPGLIQSALARVEGVPGRFEKVDCGQDFAVIVDYAHTPDGLENILQTSRELGKKRLICVFGCGGDRDRSKRPLMGEIAAKYSDFCVVTSDNPRSEDPHAIIAEIIPGMDKVEKSRYAIIVDRREAIRHAIHLARTGDLVVIAGKGHENYQLVKDQVLEFDDRKVAAELLRGKVK.

A UDP-N-acetyl-alpha-D-muramoyl-L-alanyl-D-glutamate-binding site is contributed by S30. 110 to 116 (GTNGKTT) contributes to the ATP binding site. UDP-N-acetyl-alpha-D-muramoyl-L-alanyl-D-glutamate is bound by residues 152–153 (TT), S179, and R187. K219 is modified (N6-carboxylysine). Meso-2,6-diaminopimelate is bound by residues R381, 405–408 (DNPR), G458, and E462. The Meso-diaminopimelate recognition motif motif lies at 405 to 408 (DNPR).

The protein belongs to the MurCDEF family. MurE subfamily. Mg(2+) serves as cofactor. Post-translationally, carboxylation is probably crucial for Mg(2+) binding and, consequently, for the gamma-phosphate positioning of ATP.

It localises to the cytoplasm. The catalysed reaction is UDP-N-acetyl-alpha-D-muramoyl-L-alanyl-D-glutamate + meso-2,6-diaminopimelate + ATP = UDP-N-acetyl-alpha-D-muramoyl-L-alanyl-gamma-D-glutamyl-meso-2,6-diaminopimelate + ADP + phosphate + H(+). It functions in the pathway cell wall biogenesis; peptidoglycan biosynthesis. Catalyzes the addition of meso-diaminopimelic acid to the nucleotide precursor UDP-N-acetylmuramoyl-L-alanyl-D-glutamate (UMAG) in the biosynthesis of bacterial cell-wall peptidoglycan. This is UDP-N-acetylmuramoyl-L-alanyl-D-glutamate--2,6-diaminopimelate ligase from Syntrophomonas wolfei subsp. wolfei (strain DSM 2245B / Goettingen).